The sequence spans 142 residues: Small ribosomal subunit protein uS12 (142 aa).

Residues 1-44 (MANGKYAARKLKQDRQQRRWSDSEYARRERGLGAKSDPLEGAPQ) are disordered. The segment covering 11–32 (LKQDRQQRRWSDSEYARRERGL) has biased composition (basic and acidic residues).

Belongs to the universal ribosomal protein uS12 family. As to quaternary structure, part of the 30S ribosomal subunit.

Its function is as follows. With S4 and S5 plays an important role in translational accuracy. Located at the interface of the 30S and 50S subunits. The protein is Small ribosomal subunit protein uS12 of Haloquadratum walsbyi (strain DSM 16790 / HBSQ001).